Consider the following 213-residue polypeptide: Translation initiation factor IF-3 (213 aa).

The disordered stretch occupies residues 193–213 (EKIASLPPLPPDNSGEPEDDE).

This sequence belongs to the IF-3 family. In terms of assembly, monomer.

Its subcellular location is the cytoplasm. In terms of biological role, IF-3 binds to the 30S ribosomal subunit and shifts the equilibrium between 70S ribosomes and their 50S and 30S subunits in favor of the free subunits, thus enhancing the availability of 30S subunits on which protein synthesis initiation begins. The polypeptide is Translation initiation factor IF-3 (Chlorobaculum tepidum (strain ATCC 49652 / DSM 12025 / NBRC 103806 / TLS) (Chlorobium tepidum)).